Consider the following 421-residue polypeptide: Fumarylacetoacetase (421 aa).

Position 131 (aspartate 131) interacts with Ca(2+). Residue histidine 138 is the Proton acceptor of the active site. Arginine 147 contributes to the substrate binding site. Glutamate 204, glutamate 206, and aspartate 238 together coordinate Ca(2+). Aspartate 238 contributes to the Mg(2+) binding site. 2 residues coordinate substrate: glutamine 245 and tyrosine 249. Residues lysine 258 and threonine 262 each contribute to the Mg(2+) site. Threonine 355 contributes to the substrate binding site.

It belongs to the FAH family. Ca(2+) is required as a cofactor. Requires Mg(2+) as cofactor.

The catalysed reaction is 4-fumarylacetoacetate + H2O = acetoacetate + fumarate + H(+). Its pathway is amino-acid degradation; L-phenylalanine degradation; acetoacetate and fumarate from L-phenylalanine: step 6/6. In terms of biological role, converts fumarylacetoacetate to acetoacetate and fumarate. Involved in tyrosine catabolic pathway. Catalyzes the final step in the tyrosine degradation pathway. This Arabidopsis thaliana (Mouse-ear cress) protein is Fumarylacetoacetase.